Here is a 205-residue protein sequence, read N- to C-terminus: ATP-dependent Clp protease proteolytic subunit (205 aa).

Ser101 acts as the Nucleophile in catalysis. The active site involves His126.

The protein belongs to the peptidase S14 family. In terms of assembly, component of the chloroplastic Clp protease core complex.

The protein localises to the plastid. It is found in the chloroplast stroma. It carries out the reaction Hydrolysis of proteins to small peptides in the presence of ATP and magnesium. alpha-casein is the usual test substrate. In the absence of ATP, only oligopeptides shorter than five residues are hydrolyzed (such as succinyl-Leu-Tyr-|-NHMec, and Leu-Tyr-Leu-|-Tyr-Trp, in which cleavage of the -Tyr-|-Leu- and -Tyr-|-Trp bonds also occurs).. In terms of biological role, cleaves peptides in various proteins in a process that requires ATP hydrolysis. Has a chymotrypsin-like activity. Plays a major role in the degradation of misfolded proteins. This is ATP-dependent Clp protease proteolytic subunit from Pinus contorta (Shore pine).